We begin with the raw amino-acid sequence, 368 residues long: MMSEIKTNLLDLDRDAMRAFFVELGEKPFRADQIMKWIYHFGCDDFDQMNNVNKVLRERLKAIAEIRAPEVSREQRSSDGTIKWALQVGGQEVETVYIPEEDRATLCVSSQVGCALACKFCSTAQQGFNRNLKVSEIIGQVWRAAKIVGGKRPITNVVMMGMGEPLLNLANVIPAMRLMMDDFGYGISKRRVTISTSGVVPALDILGDQIDVALAISLHAPNDKLRSEIMPINDKYNIEDFLAGVRRYLAKSNANGGRVTVEYVLLDHINDDMQHAHELAKVLKDTPSKINLIPFNPFPGNPYGKPSNSRIDRFSKVLMEYGFTVIVRKTRGDDIDAACGQLVGEVIDRTKRTMKNRMQQDGISVKMV.

Catalysis depends on E94, which acts as the Proton acceptor. The 235-residue stretch at 100–334 (EEDRATLCVS…VIVRKTRGDD (235 aa)) folds into the Radical SAM core domain. C107 and C339 are oxidised to a cystine. The [4Fe-4S] cluster site is built by C114, C118, and C121. S-adenosyl-L-methionine contacts are provided by residues 163–164 (GE), S195, 217–219 (SLH), and N296. The active-site S-methylcysteine intermediate is C339.

Belongs to the radical SAM superfamily. RlmN family. It depends on [4Fe-4S] cluster as a cofactor.

The protein resides in the cytoplasm. The enzyme catalyses adenosine(2503) in 23S rRNA + 2 reduced [2Fe-2S]-[ferredoxin] + 2 S-adenosyl-L-methionine = 2-methyladenosine(2503) in 23S rRNA + 5'-deoxyadenosine + L-methionine + 2 oxidized [2Fe-2S]-[ferredoxin] + S-adenosyl-L-homocysteine. It carries out the reaction adenosine(37) in tRNA + 2 reduced [2Fe-2S]-[ferredoxin] + 2 S-adenosyl-L-methionine = 2-methyladenosine(37) in tRNA + 5'-deoxyadenosine + L-methionine + 2 oxidized [2Fe-2S]-[ferredoxin] + S-adenosyl-L-homocysteine. Its function is as follows. Specifically methylates position 2 of adenine 2503 in 23S rRNA and position 2 of adenine 37 in tRNAs. m2A2503 modification seems to play a crucial role in the proofreading step occurring at the peptidyl transferase center and thus would serve to optimize ribosomal fidelity. This chain is Dual-specificity RNA methyltransferase RlmN, found in Aeromonas salmonicida (strain A449).